The following is a 279-amino-acid chain: Ribosome maturation factor RimP (279 aa).

Residues 197–279 (LAEEGEPEEQ…GAPALRPTPK (83 aa)) are disordered. Residues 199-210 (EEGEPEEQEEGG) are compositionally biased toward acidic residues.

The protein belongs to the RimP family.

It is found in the cytoplasm. Its function is as follows. Required for maturation of 30S ribosomal subunits. The chain is Ribosome maturation factor RimP from Methylocella silvestris (strain DSM 15510 / CIP 108128 / LMG 27833 / NCIMB 13906 / BL2).